The sequence spans 229 residues: UPF0758 protein Mbur_0382 (229 aa).

An MPN domain is found at 106 to 228 (KIRSANDVYS…YVSLKEEGYI (123 aa)). 3 residues coordinate Zn(2+): histidine 177, histidine 179, and aspartate 190. The JAMM motif motif lies at 177-190 (HNHPSGDPAPSRED).

This sequence belongs to the UPF0758 family.

The chain is UPF0758 protein Mbur_0382 from Methanococcoides burtonii (strain DSM 6242 / NBRC 107633 / OCM 468 / ACE-M).